A 389-amino-acid polypeptide reads, in one-letter code: tRNA-specific 2-thiouridylase MnmA (389 aa).

Residues 33–40 and L59 each bind ATP; that span reads GLSGGVDS. C120 functions as the Nucleophile in the catalytic mechanism. A disulfide bond links C120 and C219. An ATP-binding site is contributed by G145. The tract at residues 169 to 171 is interaction with tRNA; the sequence is KDQ. C219 functions as the Cysteine persulfide intermediate in the catalytic mechanism. The segment at 326 to 327 is interaction with tRNA; that stretch reads RY.

It belongs to the MnmA/TRMU family.

The protein resides in the cytoplasm. The enzyme catalyses S-sulfanyl-L-cysteinyl-[protein] + uridine(34) in tRNA + AH2 + ATP = 2-thiouridine(34) in tRNA + L-cysteinyl-[protein] + A + AMP + diphosphate + H(+). Its function is as follows. Catalyzes the 2-thiolation of uridine at the wobble position (U34) of tRNA, leading to the formation of s(2)U34. This is tRNA-specific 2-thiouridylase MnmA from Synechococcus sp. (strain WH7803).